The sequence spans 321 residues: Lipoyl synthase (321 aa).

[4Fe-4S] cluster-binding residues include Cys68, Cys73, Cys79, Cys94, Cys98, Cys101, and Ser308. The Radical SAM core domain maps to 80–297; that stretch reads FNHGTATFMI…KALADELGFT (218 aa).

It belongs to the radical SAM superfamily. Lipoyl synthase family. [4Fe-4S] cluster serves as cofactor.

The protein localises to the cytoplasm. The enzyme catalyses [[Fe-S] cluster scaffold protein carrying a second [4Fe-4S](2+) cluster] + N(6)-octanoyl-L-lysyl-[protein] + 2 oxidized [2Fe-2S]-[ferredoxin] + 2 S-adenosyl-L-methionine + 4 H(+) = [[Fe-S] cluster scaffold protein] + N(6)-[(R)-dihydrolipoyl]-L-lysyl-[protein] + 4 Fe(3+) + 2 hydrogen sulfide + 2 5'-deoxyadenosine + 2 L-methionine + 2 reduced [2Fe-2S]-[ferredoxin]. The protein operates within protein modification; protein lipoylation via endogenous pathway; protein N(6)-(lipoyl)lysine from octanoyl-[acyl-carrier-protein]: step 2/2. Catalyzes the radical-mediated insertion of two sulfur atoms into the C-6 and C-8 positions of the octanoyl moiety bound to the lipoyl domains of lipoate-dependent enzymes, thereby converting the octanoylated domains into lipoylated derivatives. This chain is Lipoyl synthase, found in Shewanella oneidensis (strain ATCC 700550 / JCM 31522 / CIP 106686 / LMG 19005 / NCIMB 14063 / MR-1).